The sequence spans 374 residues: tRNA-specific 2-thiouridylase MnmA (374 aa).

ATP contacts are provided by residues 15–22 (GMSGGVDS) and methionine 41. Residues 101–103 (NPD) form an interaction with target base in tRNA region. Catalysis depends on cysteine 106, which acts as the Nucleophile. Cysteine 106 and cysteine 203 are oxidised to a cystine. Position 130 (glycine 130) interacts with ATP. The interval 153-155 (KDQ) is interaction with tRNA. Cysteine 203 serves as the catalytic Cysteine persulfide intermediate. The interaction with tRNA stretch occupies residues 311–312 (RY).

Belongs to the MnmA/TRMU family.

It localises to the cytoplasm. The catalysed reaction is S-sulfanyl-L-cysteinyl-[protein] + uridine(34) in tRNA + AH2 + ATP = 2-thiouridine(34) in tRNA + L-cysteinyl-[protein] + A + AMP + diphosphate + H(+). Catalyzes the 2-thiolation of uridine at the wobble position (U34) of tRNA, leading to the formation of s(2)U34. This Lysinibacillus sphaericus (strain C3-41) protein is tRNA-specific 2-thiouridylase MnmA.